The primary structure comprises 174 residues: Probable calcium-binding protein CML20 (174 aa).

Gly-2 carries the N-myristoyl glycine lipid modification. The interval 14–35 is disordered; the sequence is LRRSRSRSPPPAVLDPSQSPLS. 4 consecutive EF-hand domains span residues 39-74, 75-100, 102-137, and 141-174; these read EAEP…SVDE, AEEM…AVME, GGLD…LNLD, and LTAE…SKQA. Residues Asp-52, Asp-54, Asp-56, Glu-63, Asp-83, Asp-85, Asp-87, Glu-94, Asp-115, Asp-117, Asn-119, Glu-126, Asp-154, Asp-156, Asp-158, and Glu-165 each contribute to the Ca(2+) site.

Potential calcium sensor. The sequence is that of Probable calcium-binding protein CML20 (CML20) from Oryza sativa subsp. japonica (Rice).